We begin with the raw amino-acid sequence, 192 residues long: Acetyltransferase PA3944 (192 aa).

Residues 18–187 enclose the N-acetyltransferase domain; the sequence is LLLRAWRDSD…RHILYRVDAA (170 aa). CoA contacts are provided by residues 105–107, glycine 113, asparagine 145, and 150–152; these read WRL and GLM.

Functionally, catalyzes the transfer of an acetyl group from acetyl coenzyme A (AcCoA) to an acceptor substrate and releases both CoA and the acetylated product. It prefers the peptide Asp-Phe methyl ester (or aspartame) and the peptide antibiotics polymyxin B and colistin. Other substrates like dopamine, serotonin, puromycin, chloramphenicol, D-glucosamine, glycine and N-alpha-acetyl-L-glutamine are used and displayed lower activity. This is Acetyltransferase PA3944 from Pseudomonas aeruginosa (strain ATCC 15692 / DSM 22644 / CIP 104116 / JCM 14847 / LMG 12228 / 1C / PRS 101 / PAO1).